The primary structure comprises 367 residues: Putative isomerase YraM (367 aa).

The protein belongs to the PrpF family.

The protein is Putative isomerase YraM (yraM) of Bacillus subtilis (strain 168).